A 182-amino-acid chain; its full sequence is MPLLNTVTTPYAEAFLQVAESRNEVDEVVTQAKSILELWNSCPEFSDAMSSPVLEVNQKKAALEKLFSSQVTPSFLNLLKLLADRQRIGLLNSVLERLLEIYREQRNIALATITSASALNEDQQSELLKKVQSIAGTDNLEIDLKVDSELLGGFVVNVGSKVIDASIAGQVRRLGLALAKVS.

Belongs to the ATPase delta chain family. In terms of assembly, F-type ATPases have 2 components, F(1) - the catalytic core - and F(0) - the membrane proton channel. F(1) has five subunits: alpha(3), beta(3), gamma(1), delta(1), epsilon(1). CF(0) has four main subunits: a(1), b(1), b'(1) and c(10-14). The alpha and beta chains form an alternating ring which encloses part of the gamma chain. F(1) is attached to F(0) by a central stalk formed by the gamma and epsilon chains, while a peripheral stalk is formed by the delta, b and b' chains.

The protein resides in the cellular thylakoid membrane. Functionally, f(1)F(0) ATP synthase produces ATP from ADP in the presence of a proton or sodium gradient. F-type ATPases consist of two structural domains, F(1) containing the extramembraneous catalytic core and F(0) containing the membrane proton channel, linked together by a central stalk and a peripheral stalk. During catalysis, ATP synthesis in the catalytic domain of F(1) is coupled via a rotary mechanism of the central stalk subunits to proton translocation. Its function is as follows. This protein is part of the stalk that links CF(0) to CF(1). It either transmits conformational changes from CF(0) to CF(1) or is implicated in proton conduction. The chain is ATP synthase subunit delta from Prochlorococcus marinus (strain NATL2A).